The sequence spans 309 residues: Probable manganese-dependent inorganic pyrophosphatase (309 aa).

6 residues coordinate Mn(2+): histidine 9, aspartate 13, aspartate 15, aspartate 75, histidine 97, and aspartate 149.

Belongs to the PPase class C family. Mn(2+) is required as a cofactor.

It is found in the cytoplasm. The enzyme catalyses diphosphate + H2O = 2 phosphate + H(+). The protein is Probable manganese-dependent inorganic pyrophosphatase of Bacillus anthracis (strain CDC 684 / NRRL 3495).